A 334-amino-acid polypeptide reads, in one-letter code: Formamidase (334 aa).

The CN hydrolase domain maps to 14–260 (MLMGLVQYPV…WEIVTAEVFP (247 aa)). The active-site Proton acceptor is the Glu60. The active-site Proton donor is Lys133. Catalysis depends on Cys166, which acts as the Nucleophile.

This sequence belongs to the carbon-nitrogen hydrolase superfamily. Aliphatic amidase family.

It catalyses the reaction formamide + H2O = formate + NH4(+). Its function is as follows. Is an aliphatic amidase with a restricted substrate specificity, as it only hydrolyzes formamide. The protein is Formamidase of Nitratidesulfovibrio vulgaris (strain DP4) (Desulfovibrio vulgaris).